The primary structure comprises 209 residues: Imidazole glycerol phosphate synthase subunit HisH (209 aa).

Residues 1-205 (MIAIIDYGMG…KGVVETWKSS (205 aa)) form the Glutamine amidotransferase type-1 domain. C79 acts as the Nucleophile in catalysis. Active-site residues include H180 and E182.

As to quaternary structure, heterodimer of HisH and HisF.

Its subcellular location is the cytoplasm. The enzyme catalyses 5-[(5-phospho-1-deoxy-D-ribulos-1-ylimino)methylamino]-1-(5-phospho-beta-D-ribosyl)imidazole-4-carboxamide + L-glutamine = D-erythro-1-(imidazol-4-yl)glycerol 3-phosphate + 5-amino-1-(5-phospho-beta-D-ribosyl)imidazole-4-carboxamide + L-glutamate + H(+). It catalyses the reaction L-glutamine + H2O = L-glutamate + NH4(+). It participates in amino-acid biosynthesis; L-histidine biosynthesis; L-histidine from 5-phospho-alpha-D-ribose 1-diphosphate: step 5/9. Functionally, IGPS catalyzes the conversion of PRFAR and glutamine to IGP, AICAR and glutamate. The HisH subunit catalyzes the hydrolysis of glutamine to glutamate and ammonia as part of the synthesis of IGP and AICAR. The resulting ammonia molecule is channeled to the active site of HisF. This Bacillus cereus (strain AH187) protein is Imidazole glycerol phosphate synthase subunit HisH.